Here is a 201-residue protein sequence, read N- to C-terminus: Thylakoid membrane protein slr1796 (201 aa).

Residues 16–36 traverse the membrane as a helical segment; that stretch reads FLIVSLAFAMLLLGIWGTLPF.

It localises to the cellular thylakoid membrane. This is Thylakoid membrane protein slr1796 from Synechocystis sp. (strain ATCC 27184 / PCC 6803 / Kazusa).